Reading from the N-terminus, the 612-residue chain is Dihydroxy-acid dehydratase (612 aa).

Position 81 (Asp-81) interacts with Mg(2+). Residue Cys-122 participates in [2Fe-2S] cluster binding. Positions 123 and 124 each coordinate Mg(2+). Lys-124 bears the N6-carboxylysine mark. Cys-193 serves as a coordination point for [2Fe-2S] cluster. Glu-489 provides a ligand contact to Mg(2+). Ser-515 serves as the catalytic Proton acceptor.

The protein belongs to the IlvD/Edd family. In terms of assembly, homodimer. [2Fe-2S] cluster is required as a cofactor. Requires Mg(2+) as cofactor.

It catalyses the reaction (2R)-2,3-dihydroxy-3-methylbutanoate = 3-methyl-2-oxobutanoate + H2O. The enzyme catalyses (2R,3R)-2,3-dihydroxy-3-methylpentanoate = (S)-3-methyl-2-oxopentanoate + H2O. Its pathway is amino-acid biosynthesis; L-isoleucine biosynthesis; L-isoleucine from 2-oxobutanoate: step 3/4. The protein operates within amino-acid biosynthesis; L-valine biosynthesis; L-valine from pyruvate: step 3/4. Functionally, functions in the biosynthesis of branched-chain amino acids. Catalyzes the dehydration of (2R,3R)-2,3-dihydroxy-3-methylpentanoate (2,3-dihydroxy-3-methylvalerate) into 2-oxo-3-methylpentanoate (2-oxo-3-methylvalerate) and of (2R)-2,3-dihydroxy-3-methylbutanoate (2,3-dihydroxyisovalerate) into 2-oxo-3-methylbutanoate (2-oxoisovalerate), the penultimate precursor to L-isoleucine and L-valine, respectively. The polypeptide is Dihydroxy-acid dehydratase (Pseudomonas aeruginosa (strain LESB58)).